The primary structure comprises 1115 residues: PAN2-PAN3 deadenylation complex catalytic subunit PAN2 (1115 aa).

WD repeat units follow at residues 27 to 66 (NRDKEITAISFDEKANLIWSGDSYGCISSYDPTFQLYTRY), 112 to 153 (AAFS…GCLD), 155 to 194 (LLNYSSKVKLMCSNNKVLSIGRQTGTVDLLDPTSNRTIKS), 197 to 236 (AHSASISAMDLRDNTLVTVGKSKRFYNLYADPFVNVYDLR), and 295 to 334 (HPCQSIKKLCLSPNGDVLGILEADNHLDTWRRSSNNMGMF). The interval 337 to 473 (TPEMLAYPDY…IQTYTSINKY (137 aa)) is linker. Residues 474–855 (EVPPAYSRLP…TPEIIIYCDA (382 aa)) form the USP domain. Residues C660, H662, C713, and C716 each coordinate Zn(2+). Residues 907–1079 (VAIDAEFVSL…EDAHTALILY (173 aa)) form the Exonuclease domain. Residues D910, E912, D1020, and D1071 each contribute to the a divalent metal cation site.

This sequence belongs to the peptidase C19 family. PAN2 subfamily. As to quaternary structure, forms a heterotrimer with an asymmetric homodimer of the regulatory subunit PAN3 to form the poly(A)-nuclease (PAN) deadenylation complex. A divalent metal cation serves as cofactor.

The protein resides in the cytoplasm. The enzyme catalyses Exonucleolytic cleavage of poly(A) to 5'-AMP.. With respect to regulation, positively regulated by the regulatory subunit PAN3. Negatively regulated by PAB1-binding protein PBP1. Inhibited under stress conditions. Inhibition of deadenylation under stress increases mRNA stability, which may be a mechanism to retain the majority of the cytoplasmic pool of mRNAs for later reuse and recovery from stress. Its function is as follows. Catalytic subunit of the poly(A)-nuclease (PAN) deadenylation complex, one of two cytoplasmic mRNA deadenylases involved in mRNA turnover. PAN specifically shortens poly(A) tails of RNA and the activity is stimulated by poly(A)-binding protein PAB1. PAN deadenylation is followed by rapid degradation of the shortened mRNA tails by the CCR4-NOT complex. Deadenylated mRNAs are then degraded by two alternative mechanisms, namely exosome-mediated 3'-5' exonucleolytic degradation, or deadenylation-dependent mRNA decaping by DCP1-DCP2 and subsequent 5'-3' exonucleolytic degradation by XRN1. May also be involved in post-transcriptional maturation of mRNA poly(A) tails, trimming the tails from their synthesized length to the slightly shorter, apparently messenger-specific length found on newly exported mRNAs. PAN cooperates with protein kinase DUN1 in the regulation of RAD5 mRNA levels and cell survival in response to replicational stress. This is PAN2-PAN3 deadenylation complex catalytic subunit PAN2 from Saccharomyces cerevisiae (strain ATCC 204508 / S288c) (Baker's yeast).